An 811-amino-acid polypeptide reads, in one-letter code: MPRCFQLPCSTRMPTTEVPQAADGQGDAGDGEEAAEPEGKFKPPKNTKRKNRDYVRFTPLLLVLAALVSAGVMLWYFLGYKAEVTVSQVYSGSLRVLNRHFSQDLGRRESIAFRSESAKAQKMLQELVASTRLGTYYNSSSVYSFGEGPLTCFFWFILDIPEYQRLTLSPEVVRELLVDELLSNSSTLASYKTEYEVDPEGLVILEASVNDIVVLNSTLGCYRYSYVNPGQVLPLKGPDQQTTSCLWHLQGPEDLMIKVRLEWTRVDCRDRVAMYDAAGPLEKRLITSVYGCSRQEPVMEVLASGSVMAVVWKKGMHSYYDPFLLSVKSVAFQDCQVNLTLEGRLDTQGFLRTPYYPSYYSPSTHCSWHLTVPSLDYGLALWFDAYALRRQKYNRLCTQGQWMIQNRRLCGFRTLQPYAERIPMVASDGVTINFTSQISLTGPGVQVYYSLYNQSDPCPGEFLCSVNGLCVPACDGIKDCPNGLDERNCVCRAMFQCQEDSTCISLPRVCDRQPDCLNGSDEEQCQEGVPCGTFTFQCEDRSCVKKPNPECDGQSDCRDGSDEQHCDCGLQGLSSRIVGGTVSSEGEWPWQASLQIRGRHICGGALIADRWVITAAHCFQEDSMASPKLWTVFLGKMRQNSRWPGEVSFKVSRLFLHPYHEEDSHDYDVALLQLDHPVVYSATVRPVCLPARSHFFEPGQHCWITGWGAQREGGPVSNTLQKVDVQLVPQDLCSEAYRYQVSPRMLCAGYRKGKKDACQGDSGGPLVCREPSGRWFLAGLVSWGLGCGRPNFFGVYTRVTRVINWIQQVLT.

The disordered stretch occupies residues 1-48 (MPRCFQLPCSTRMPTTEVPQAADGQGDAGDGEEAAEPEGKFKPPKNTK). Topologically, residues 1–59 (MPRCFQLPCSTRMPTTEVPQAADGQGDAGDGEEAAEPEGKFKPPKNTKRKNRDYVRFTP) are cytoplasmic. Polar residues predominate over residues 8-18 (PCSTRMPTTEV). Residues 60–80 (LLLVLAALVSAGVMLWYFLGY) traverse the membrane as a helical; Signal-anchor for type II membrane protein segment. The Extracellular portion of the chain corresponds to 81–811 (KAEVTVSQVY…VINWIQQVLT (731 aa)). In terms of domain architecture, SEA spans 86-209 (VSQVYSGSLR…EGLVILEASV (124 aa)). Residues Asn-138, Asn-184, Asn-216, Asn-338, Asn-433, and Asn-453 are each glycosylated (N-linked (GlcNAc...) asparagine). CUB domains follow at residues 213 to 336 (VVLN…QDCQ) and 323 to 440 (FLLS…QISL). Cys-335 and Cys-366 form a disulfide bridge. LDL-receptor class A domains follow at residues 445 to 477 (VQVYYSLYNQSDPCPGEFLCSVNGLCVPACDGI), 478 to 514 (KDCPNGLDERNCVCRAMFQCQEDSTCISLPRVCDRQP), and 518 to 555 (NGSDEEQCQEGVPCGTFTFQCEDRSCVKKPNPECDGQS). 10 cysteine pairs are disulfide-bonded: Cys-458–Cys-470, Cys-464–Cys-480, Cys-474–Cys-489, Cys-491–Cys-503, Cys-497–Cys-516, Cys-510–Cys-525, Cys-531–Cys-543, Cys-538–Cys-557, Cys-551–Cys-566, and Cys-602–Cys-618. Residue Asn-518 is glycosylated (N-linked (GlcNAc...) asparagine). Positions 577–811 (IVGGTVSSEG…VINWIQQVLT (235 aa)) constitute a Peptidase S1 domain. Catalysis depends on charge relay system residues His-617 and Asp-668. 3 disulfides stabilise this stretch: Cys-702–Cys-768, Cys-733–Cys-747, and Cys-758–Cys-787. The active-site Charge relay system is Ser-762.

The protein belongs to the peptidase S1 family. In terms of assembly, interacts with HJV. In terms of processing, the single-chain zymogen undergoes autoproteolytic processing. This results in TMPRSS6 shedding from the cell surface and conversion into an activated two-chains form which is released extracellularly. The process involves a trans-activation mechanism that requires TMPRSS6 oligomerization. As to expression, expressed at highest levels in adult mice liver, kidney and uterus. Also strongly expressed within the nasal cavity by olfactory epithelial cells. A weak, but detectable, signal in adult mice tissues analyzed including brain, lung, heart, kidney, spleen, muscle, intestine, thymus and pancreas. No signal in residual embryonic yolk sac, developing kidney tubules or in embryonic tissues analyzed including lung, heart, gastrointestinal tract and epithelium of the oral cavity.

The protein resides in the cell membrane. Its function is as follows. Membrane-bound serine protease. Through the cleavage of cell surface HJV, a regulator of the expression of the iron absorption-regulating hormone hepicidin/HAMP, plays a role in iron homeostasis. In Mus musculus (Mouse), this protein is Transmembrane protease serine 6 (Tmprss6).